The following is a 262-amino-acid chain: Probable carboxylesterase SOBER1-like (262 aa).

Active-site charge relay system residues include Ser151, Asp205, and His237.

Belongs to the AB hydrolase superfamily. AB hydrolase 2 family.

Its function is as follows. Carboxylesterase. The chain is Probable carboxylesterase SOBER1-like from Arabidopsis thaliana (Mouse-ear cress).